The chain runs to 754 residues: Peptidyl-prolyl cis-trans isomerase G (754 aa).

One can recognise a PPIase cyclophilin-type domain in the interval 11–176 (FFDIAINNQP…AEVRILSCGE (166 aa)). Over residues 182-193 (KVKKEEKKRHKS) the composition is skewed to basic residues. Residues 182–754 (KVKKEEKKRH…SPGTDEDKSG (573 aa)) form a disordered region. Residues 194 to 216 (SSSSSSSSSDSDSSSDSQSSSDS) show a composition bias toward low complexity. The segment covering 228-253 (KKRKKKHRKNSRKHKKEKKKRKKSKK) has biased composition (basic residues). Serine 254, serine 256, serine 257, serine 259, and serine 290 each carry phosphoserine. Basic and acidic residues predominate over residues 292–310 (PKADEKERKNREREREREC). Serine 315 carries the post-translational modification Phosphoserine. Residues 329-347 (SGRKIKGRGPRRYRTPSRS) show a composition bias toward basic residues. Basic and acidic residues-rich tracts occupy residues 348–368 (RSRD…EMQR) and 379–449 (RWIK…DKYK). Serine 356 is subject to Phosphoserine. A Phosphothreonine modification is found at threonine 358. A Phosphoserine modification is found at serine 386. Lysine 392 is covalently cross-linked (Glycyl lysine isopeptide (Lys-Gly) (interchain with G-Cter in SUMO2)). Residues serine 397, serine 413, and serine 415 each carry the phosphoserine modification. Over residues 450–462 (NKVKKRAKSKSRS) the composition is skewed to basic residues. Basic and acidic residues-rich tracts occupy residues 463–553 (KSKE…DITK) and 578–599 (RTHD…QEYR). Residues 616 to 627 (SRSKDRRRRRRD) show a composition bias toward basic residues. A compositionally biased stretch (basic and acidic residues) spans 628-686 (SRSSEREESQSRNKDKYRNQESKSSHRKENSESEKRMYSKSRDHNSSNNSREKKADRDQ). Residues serine 687 and serine 690 each carry the phosphoserine modification. Residues 687-698 (SPFSKIKQSSQD) show a composition bias toward polar residues. A Glycyl lysine isopeptide (Lys-Gly) (interchain with G-Cter in SUMO2) cross-link involves residue lysine 693. A phosphoserine mark is found at serine 696, serine 744, and serine 745. Positions 707-754 (KNKEDEKIRSSVEKENQKSKGQENDHVHEKNKKFDHESSPGTDEDKSG) are enriched in basic and acidic residues. Threonine 748 bears the Phosphothreonine mark. Serine 753 is modified (phosphoserine).

As to quaternary structure, interacts with CLK1, PNN and with the phosphorylated C-terminal domain of RNA polymerase II. As to expression, ubiquitous.

Its subcellular location is the nucleus matrix. It localises to the nucleus speckle. It carries out the reaction [protein]-peptidylproline (omega=180) = [protein]-peptidylproline (omega=0). Inhibited by cyclosporin A (CsA). Functionally, PPIase that catalyzes the cis-trans isomerization of proline imidic peptide bonds in oligopeptides and may therefore assist protein folding. May be implicated in the folding, transport, and assembly of proteins. May play an important role in the regulation of pre-mRNA splicing. The sequence is that of Peptidyl-prolyl cis-trans isomerase G (PPIG) from Homo sapiens (Human).